A 394-amino-acid chain; its full sequence is Phosphopentomutase (394 aa).

Mn(2+) contacts are provided by aspartate 14, aspartate 287, histidine 292, aspartate 328, histidine 329, and histidine 340.

Belongs to the phosphopentomutase family. Mn(2+) is required as a cofactor.

The protein resides in the cytoplasm. The enzyme catalyses 2-deoxy-alpha-D-ribose 1-phosphate = 2-deoxy-D-ribose 5-phosphate. It carries out the reaction alpha-D-ribose 1-phosphate = D-ribose 5-phosphate. It participates in carbohydrate degradation; 2-deoxy-D-ribose 1-phosphate degradation; D-glyceraldehyde 3-phosphate and acetaldehyde from 2-deoxy-alpha-D-ribose 1-phosphate: step 1/2. Isomerase that catalyzes the conversion of deoxy-ribose 1-phosphate (dRib-1-P) and ribose 1-phosphate (Rib-1-P) to deoxy-ribose 5-phosphate (dRib-5-P) and ribose 5-phosphate (Rib-5-P), respectively. In Listeria monocytogenes serovar 1/2a (strain ATCC BAA-679 / EGD-e), this protein is Phosphopentomutase.